Reading from the N-terminus, the 407-residue chain is Arylacetamide deacetylase-like 3 (407 aa).

Positions His119–Gly121 match the Involved in the stabilization of the negatively charged intermediate by the formation of the oxyanion hole motif. Active-site residues include Ser193, Asp347, and His377.

This sequence belongs to the 'GDXG' lipolytic enzyme family.

The chain is Arylacetamide deacetylase-like 3 (AADACL3) from Homo sapiens (Human).